Reading from the N-terminus, the 127-residue chain is Fumarate reductase subunit C (127 aa).

3 helical membrane-spanning segments follow: residues 30–50 (ATVLPLILFTLFLTVGLGSLV), 67–87 (VVIAINIVALLGSLLHAHTFF), and 107–127 (IIVLAQWAAVAFISLIVLIVV).

This sequence belongs to the FrdC family. Part of an enzyme complex containing four subunits: a flavoprotein (FrdA), an iron-sulfur protein (FrdB), and two hydrophobic anchor proteins (FrdC and FrdD).

It is found in the cell inner membrane. Anchors the catalytic components of the fumarate reductase complex to the cell membrane, binds quinones. The polypeptide is Fumarate reductase subunit C (Vibrio vulnificus (strain CMCP6)).